Reading from the N-terminus, the 148-residue chain is Cystatin-C (148 aa).

The N-terminal stretch at 1–28 is a signal peptide; the sequence is MARSLGVPLLLLAALVVALALAVSPAAG. The Secondary area of contact motif lies at 83–87; the sequence is QIVSG. 2 disulfides stabilise this stretch: Cys101-Cys111 and Cys125-Cys145.

This sequence belongs to the cystatin family.

It is found in the secreted. This is a thiol proteinase inhibitor. In Oryctolagus cuniculus (Rabbit), this protein is Cystatin-C (CST3).